The chain runs to 1206 residues: Pre-mRNA-splicing factor prp12 (1206 aa).

Belongs to the RSE1 family. As to quaternary structure, belongs to the 40S cdc5-associated complex (or cwf complex), a spliceosome sub-complex reminiscent of a late-stage spliceosome composed of the U2, U5 and U6 snRNAs and at least brr2, cdc5, cwf2/prp3, cwf3/syf1, cwf4/syf3, cwf5/ecm2, spp42/cwf6, cwf7/spf27, cwf8, cwf9, cwf10, cwf11, cwf12, prp45/cwf13, cwf14, cwf15, cwf16, cwf17, cwf18, cwf19, cwf20, cwf21, cwf22, cwf23, cwf24, cwf25, cwf26, cyp7/cwf27, cwf28, cwf29/ist3, lea1, msl1, prp5/cwf1, prp10, prp12/sap130, prp17, prp22, sap61, sap62, sap114, sap145, slu7, smb1, smd1, smd3, smf1, smg1 and syf2.

The protein resides in the nucleus. In terms of biological role, involved in mRNA splicing and G2/M transition. The sequence is that of Pre-mRNA-splicing factor prp12 (prp12) from Schizosaccharomyces pombe (strain 972 / ATCC 24843) (Fission yeast).